A 126-amino-acid polypeptide reads, in one-letter code: C-type natriuretic peptide (126 aa).

Residues 1–23 (MHLSQLIACALLLALLSLRPSEA) form the signal peptide. Residues 20 to 73 (PSEAKPGTPPKVPRTPPGEELADSQAAGGNQKKGDKTPGSGGANLKGDRSRLLR) form a disordered region. Positions 24–73 (KPGTPPKVPRTPPGEELADSQAAGGNQKKGDKTPGSGGANLKGDRSRLLR) are excised as a propeptide. Residues 26-35 (GTPPKVPRTP) show a composition bias toward pro residues. The cysteines at positions 110 and 126 are disulfide-linked.

It belongs to the natriuretic peptide family. In terms of processing, degraded by IDE (in vitro).

It localises to the secreted. Its function is as follows. Hormone which plays a role in endochondral ossification through regulation of cartilaginous growth plate chondrocytes proliferation and differentiation. May also be vasoactive and natriuretic. Acts by specifically binding and stimulating NPR2 to produce cGMP. Binds the clearance receptor NPR3. The protein is C-type natriuretic peptide (Nppc) of Mus musculus (Mouse).